Consider the following 433-residue polypeptide: Protein translocase subunit SecY (433 aa).

10 consecutive transmembrane segments (helical) span residues 17-37, 71-91, 117-137, 141-161, 184-204, 212-232, 268-288, 310-330, 366-386, and 388-408; these read IVFT…PIPG, IFAL…LMSV, LTVL…ESIV, GPVV…TLVV, LIIF…MFEL, PLIA…IIFF, GVIP…LANF, YILL…AIVF, LTVI…LLMN, and YVIS…VVLD.

Belongs to the SecY/SEC61-alpha family. As to quaternary structure, component of the Sec protein translocase complex. Heterotrimer consisting of SecY, SecE and SecG subunits. The heterotrimers can form oligomers, although 1 heterotrimer is thought to be able to translocate proteins. Interacts with the ribosome. Interacts with SecDF, and other proteins may be involved. Interacts with SecA.

The protein localises to the cell inner membrane. Its function is as follows. The central subunit of the protein translocation channel SecYEG. Consists of two halves formed by TMs 1-5 and 6-10. These two domains form a lateral gate at the front which open onto the bilayer between TMs 2 and 7, and are clamped together by SecE at the back. The channel is closed by both a pore ring composed of hydrophobic SecY resides and a short helix (helix 2A) on the extracellular side of the membrane which forms a plug. The plug probably moves laterally to allow the channel to open. The ring and the pore may move independently. This Rickettsia conorii (strain ATCC VR-613 / Malish 7) protein is Protein translocase subunit SecY.